A 209-amino-acid chain; its full sequence is uncharacterized protein (209 aa).

A run of 3 helical transmembrane segments spans residues 26–48 (LRYF…GLAV), 147–169 (AYLV…PFLM), and 179–196 (IVAA…VYLL).

The protein localises to the cell membrane. This is an uncharacterized protein from Archaeoglobus fulgidus (strain ATCC 49558 / DSM 4304 / JCM 9628 / NBRC 100126 / VC-16).